The primary structure comprises 521 residues: Citrinin biosynthesis cluster MFS transporter ctnC (521 aa).

The interval 1-29 is disordered; the sequence is MKEEIDAPVSTDASGTDLENARDQPSGEK. The next 8 membrane-spanning stretches (helical) occupy residues 58-78, 95-115, 124-144, 155-175, 182-202, 237-257, 313-333, and 349-369; these read SLIT…SSVF, VMTL…LVWG, LKPL…VAVA, FFLG…LADF, AIAI…GPIM, WTAW…FLTL, ILVC…LFFV, and GIAA…CLLV. Residue N383 is glycosylated (N-linked (GlcNAc...) asparagine). The next 4 membrane-spanning stretches (helical) occupy residues 392-412, 417-437, 465-485, and 489-509; these read LPPM…FGWT, ISWA…LMIW, AVSA…GVDW, and LLGF…FYGA.

It belongs to the major facilitator superfamily. CAR1 family.

The protein localises to the membrane. Functionally, MFS transporter; part of the gene cluster that mediates the biosynthesis the mycotoxin citrinin, a hepato-nephrotoxic compound to humans due to inhibition of respiration complex III. The chain is Citrinin biosynthesis cluster MFS transporter ctnC (ctnC) from Monascus purpureus (Red mold).